A 185-amino-acid polypeptide reads, in one-letter code: Ribosome-recycling factor (185 aa).

This sequence belongs to the RRF family.

The protein resides in the cytoplasm. Functionally, responsible for the release of ribosomes from messenger RNA at the termination of protein biosynthesis. May increase the efficiency of translation by recycling ribosomes from one round of translation to another. The protein is Ribosome-recycling factor of Actinobacillus pleuropneumoniae serotype 5b (strain L20).